A 542-amino-acid polypeptide reads, in one-letter code: Plasminogen-binding protein PgbB (542 aa).

A disordered region spans residues 399-542 (KSASKKSQKG…RRKALEMNKK (144 aa)). Composition is skewed to basic and acidic residues over residues 418-435 (QERH…ENKV) and 447-456 (VKTRRPEPIR). Polar residues predominate over residues 457–467 (DQNNATQQGET). Residues 481–542 (NAAKKEVPKP…RRKALEMNKK (62 aa)) are compositionally biased toward basic and acidic residues.

It is found in the cell surface. In terms of biological role, binds plasminogen, specifically, and in a concentration and lysine-dependent manner. Plasminogen is the precursor of plasmin, a serine protease that cleaves fibrin, fibronectin, laminin and vitronectin. Acquisition of plasminogen/plasmin could enable H.pylori to degrade host components. The polypeptide is Plasminogen-binding protein PgbB (pgbB) (Helicobacter pylori (strain ATCC 700392 / 26695) (Campylobacter pylori)).